The chain runs to 334 residues: N-acetyl-gamma-glutamyl-phosphate reductase (334 aa).

The active site involves Cys154.

This sequence belongs to the NAGSA dehydrogenase family. Type 1 subfamily.

Its subcellular location is the cytoplasm. The enzyme catalyses N-acetyl-L-glutamate 5-semialdehyde + phosphate + NADP(+) = N-acetyl-L-glutamyl 5-phosphate + NADPH + H(+). It participates in amino-acid biosynthesis; L-arginine biosynthesis; N(2)-acetyl-L-ornithine from L-glutamate: step 3/4. Functionally, catalyzes the NADPH-dependent reduction of N-acetyl-5-glutamyl phosphate to yield N-acetyl-L-glutamate 5-semialdehyde. This is N-acetyl-gamma-glutamyl-phosphate reductase from Buchnera aphidicola subsp. Acyrthosiphon pisum (strain Tuc7).